We begin with the raw amino-acid sequence, 63 residues long: Bowman-Birk type proteinase inhibitor (63 aa).

Cystine bridges form between cysteine 8/cysteine 61, cysteine 9/cysteine 24, cysteine 12/cysteine 57, cysteine 14/cysteine 22, cysteine 31/cysteine 38, cysteine 35/cysteine 50, and cysteine 40/cysteine 48.

Belongs to the Bowman-Birk serine protease inhibitor family.

Functionally, this inhibitor has two domains, each with separate antiprotease activity. Inhibits bovine trypsin and chymotrypsin, in a molar ratio of 1:1. The trypsin inhibition of FBI is independent of chymotrypsin inhibition, but the chymotrypsin inhibition is not completely independent of trypsin inhibition. This Vicia faba (Broad bean) protein is Bowman-Birk type proteinase inhibitor.